The chain runs to 1010 residues: Probable LRR receptor-like serine/threonine-protein kinase At3g47570 (1010 aa).

The first 19 residues, 1-19 (MRLFLLLAFNALMLLETHG), serve as a signal peptide directing secretion. Residues 20-645 (FTDETDRQAL…SSRLKKVVIG (626 aa)) are Extracellular-facing. 2 N-linked (GlcNAc...) asparagine glycosylation sites follow: asparagine 48 and asparagine 88. 10 LRR repeats span residues 89–113 (LSFLVSLDLYENFFGGTIPQEVGQL), 114–137 (SRLEYLDMGINYLRGPIPLGLYNC), 139–161 (RLLNLRLDSNRLGGSVPSELGSL), 162–185 (TNLVQLNLYGNNMRGKLPTSLGNL), 186–209 (TLLEQLALSHNNLEGEIPSDVAQL), 211–233 (QIWSLQLVANNFSGVFPPALYNL), 234–258 (SSLKLLGIGYNHFSGRLRPDLGILL), 259–282 (PNLLSFNMGGNYFTGSIPTTLSNI), 283–307 (STLERLGMNENNLTGSIPTFGNVPN), and 310–333 (LLFLHTNSLGSDSSRDLEFLTSLT). Residue asparagine 136 is glycosylated (N-linked (GlcNAc...) asparagine). Asparagine 184 carries N-linked (GlcNAc...) asparagine glycosylation. Asparagine 221 and asparagine 232 each carry an N-linked (GlcNAc...) asparagine glycan. N-linked (GlcNAc...) asparagine glycosylation is found at asparagine 281 and asparagine 294. 2 N-linked (GlcNAc...) asparagine glycosylation sites follow: asparagine 334 and asparagine 358. 11 LRR repeats span residues 335–359 (CTQLETLGIGRNRLGGDLPISIANL), 361–384 (AKLVTLDLGGTLISGSIPYDIGNL), 385–408 (INLQKLILDQNMLSGPLPTSLGKL), 410–432 (NLRYLSLFSNRLSGGIPAFIGNM), 433–455 (TMLETLDLSNNGFEGIVPTSLGN), 457–480 (SHLLELWIGDNKLNGTIPLEIMKI), 481–504 (QQLLRLDMSGNSLIGSLPQDIGAL), 505–528 (QNLGTLSLGDNKLSGKLPQTLGNC), 530–551 (TMESLFLEGNLFYGDIPDLKGL), 552–574 (VGVKEVDLSNNDLSGSIPEYFAS), and 575–600 (FSKLEYLNLSFNNLEGKVPVKGIFEN). 3 N-linked (GlcNAc...) asparagine glycosylation sites follow: asparagine 431, asparagine 455, and asparagine 470. Residues asparagine 582 and asparagine 600 are each glycosylated (N-linked (GlcNAc...) asparagine). The helical transmembrane segment at 646-666 (VSVGITLLLLLFMASVTLIWL) threads the bilayer. The Cytoplasmic segment spans residues 667–1010 (RKRKKNKETN…FFKASRTTWR (344 aa)). Threonine 699 is modified (phosphothreonine). The 301-residue stretch at 702–1002 (FSSSNMVGSG…ELISIRERFF (301 aa)) folds into the Protein kinase domain. Residues 708–716 (VGSGSFGTV) and lysine 731 each bind ATP. A phosphotyrosine mark is found at tyrosine 781 and tyrosine 826. Residue aspartate 839 is the Proton acceptor of the active site. Tyrosine 887 is modified (phosphotyrosine).

It belongs to the protein kinase superfamily. Ser/Thr protein kinase family.

It is found in the cell membrane. The catalysed reaction is L-seryl-[protein] + ATP = O-phospho-L-seryl-[protein] + ADP + H(+). It catalyses the reaction L-threonyl-[protein] + ATP = O-phospho-L-threonyl-[protein] + ADP + H(+). This is Probable LRR receptor-like serine/threonine-protein kinase At3g47570 from Arabidopsis thaliana (Mouse-ear cress).